Consider the following 411-residue polypeptide: Gamma-glutamyl phosphate reductase (411 aa).

It belongs to the gamma-glutamyl phosphate reductase family.

The protein localises to the cytoplasm. It catalyses the reaction L-glutamate 5-semialdehyde + phosphate + NADP(+) = L-glutamyl 5-phosphate + NADPH + H(+). It functions in the pathway amino-acid biosynthesis; L-proline biosynthesis; L-glutamate 5-semialdehyde from L-glutamate: step 2/2. Functionally, catalyzes the NADPH-dependent reduction of L-glutamate 5-phosphate into L-glutamate 5-semialdehyde and phosphate. The product spontaneously undergoes cyclization to form 1-pyrroline-5-carboxylate. This chain is Gamma-glutamyl phosphate reductase, found in Wolinella succinogenes (strain ATCC 29543 / DSM 1740 / CCUG 13145 / JCM 31913 / LMG 7466 / NCTC 11488 / FDC 602W) (Vibrio succinogenes).